The chain runs to 191 residues: Peptidyl-tRNA hydrolase (191 aa).

A tRNA-binding site is contributed by Tyr-14. His-19 functions as the Proton acceptor in the catalytic mechanism. TRNA contacts are provided by Tyr-64, Asn-66, and Asn-112.

It belongs to the PTH family. In terms of assembly, monomer.

It localises to the cytoplasm. It catalyses the reaction an N-acyl-L-alpha-aminoacyl-tRNA + H2O = an N-acyl-L-amino acid + a tRNA + H(+). Hydrolyzes ribosome-free peptidyl-tRNAs (with 1 or more amino acids incorporated), which drop off the ribosome during protein synthesis, or as a result of ribosome stalling. Its function is as follows. Catalyzes the release of premature peptidyl moieties from peptidyl-tRNA molecules trapped in stalled 50S ribosomal subunits, and thus maintains levels of free tRNAs and 50S ribosomes. The chain is Peptidyl-tRNA hydrolase from Clostridium beijerinckii (strain ATCC 51743 / NCIMB 8052) (Clostridium acetobutylicum).